Here is a 662-residue protein sequence, read N- to C-terminus: Protein transport Sec1b (662 aa).

This sequence belongs to the STXBP/unc-18/SEC1 family.

In terms of biological role, involved in the vesicle trafficking. Binds syntaxins. This is Protein transport Sec1b (SEC1B) from Arabidopsis thaliana (Mouse-ear cress).